The following is a 663-amino-acid chain: MAIPEEFDILVLGGGSSGSCIAGRLANLDHSLKVGLIEAGENNLNNPWVYLPGIYPRNMKLDSKTASFYTSNPSPHLNGRRAIVPCANILGGGSSINFMMYTRGSASDYDDFEAEGWKTKDLLPLMKKTETYQRACNNPEIHGFEGPIKVSFGNYTYPVCQDFLRATESQGIPYVDDLEDLVTAHGAEHWLKWINRDTGRRSDSAHAFVHSTMRNHDNLYLICNTKVDKIIVEDGRAAAVRTVPSKPLNAKKPTHKVYRARKQIVLSCGTISSPLVLQRSGFGDPIKLRAAGVKPLVNLPGVGRNFQDHYCFFSPYRIKPQYESFDDFVRGDANIQKKVFDQWYANGTGPLATNGIEAGVKIRPTPEELSQMDESFQEGYREYFEDKPDKPVMHYSIIAGFFGDHTKIPPGKYMTMFHFLEYPFSRGSIHITSPDPYATPDFDPGFMNDERDMAPMVWSYKKSRETARKMDHFAGEVTSHHPLFPYSSEARAYEMDLETSNAYGGPLNLTAGLAHGSWTQPLKKPAGRNEGHVTSNQVELHPDIEYDEEDDKAIENYIREHTETTWHCLGTCSIGPREGSKIVKWGGVLDHRSNVYGVKGLKVGDLSVCPDNVGCNTYTTALLIGEKTATLVGEDLGYTGEALDMTVPQFKLGTYEKTGLARF.

8 to 38 is a binding site for FAD; that stretch reads DILVLGGGSSGSCIAGRLANLDHSLKVGLIE. His567 acts as the Proton acceptor in catalysis. The Microbody targeting signal motif lies at 661–663; that stretch reads ARF.

It belongs to the GMC oxidoreductase family. Homooctamer. Requires FAD as cofactor.

Its subcellular location is the peroxisome matrix. The catalysed reaction is a primary alcohol + O2 = an aldehyde + H2O2. The protein operates within energy metabolism; methane degradation. Minor isoform of alcohol oxidase, which catalyzes the oxidation of methanol to formaldehyde and hydrogen peroxide, the first step in the methanol utilization pathway of methylotrophic yeasts. The polypeptide is Alcohol oxidase 2 (AOX2) (Komagataella phaffii (strain ATCC 76273 / CBS 7435 / CECT 11047 / NRRL Y-11430 / Wegner 21-1) (Yeast)).